A 412-amino-acid chain; its full sequence is Tyrosine--tRNA ligase (412 aa).

A 'HIGH' region motif is present at residues 50–59 (PTGTDIHLGH). Residues 244–248 (KMSKS) carry the 'KMSKS' region motif. Lysine 247 lines the ATP pocket. In terms of domain architecture, S4 RNA-binding spans 348–411 (VKFFYLLSSL…IGKKIIKRFE (64 aa)).

Belongs to the class-I aminoacyl-tRNA synthetase family. TyrS type 2 subfamily. As to quaternary structure, homodimer.

The protein localises to the cytoplasm. It catalyses the reaction tRNA(Tyr) + L-tyrosine + ATP = L-tyrosyl-tRNA(Tyr) + AMP + diphosphate + H(+). In terms of biological role, catalyzes the attachment of tyrosine to tRNA(Tyr) in a two-step reaction: tyrosine is first activated by ATP to form Tyr-AMP and then transferred to the acceptor end of tRNA(Tyr). This is Tyrosine--tRNA ligase from Prochlorococcus marinus (strain MIT 9312).